We begin with the raw amino-acid sequence, 163 residues long: Nucleotide-binding protein SACE_6882 (163 aa).

This sequence belongs to the YajQ family.

In terms of biological role, nucleotide-binding protein. This is Nucleotide-binding protein SACE_6882 from Saccharopolyspora erythraea (strain ATCC 11635 / DSM 40517 / JCM 4748 / NBRC 13426 / NCIMB 8594 / NRRL 2338).